Consider the following 610-residue polypeptide: Aspartate--tRNA(Asp/Asn) ligase (610 aa).

Glutamate 177 lines the L-aspartate pocket. An aspartate region spans residues 201 to 204 (QLFK). Arginine 223 lines the L-aspartate pocket. ATP contacts are provided by residues 223 to 225 (RDE) and glutamine 232. Histidine 461 provides a ligand contact to L-aspartate. Glutamate 499 lines the ATP pocket. Arginine 506 contacts L-aspartate. 551–554 (GVDR) contacts ATP.

The protein belongs to the class-II aminoacyl-tRNA synthetase family. Type 1 subfamily. In terms of assembly, homodimer.

It is found in the cytoplasm. The catalysed reaction is tRNA(Asx) + L-aspartate + ATP = L-aspartyl-tRNA(Asx) + AMP + diphosphate. Functionally, aspartyl-tRNA synthetase with relaxed tRNA specificity since it is able to aspartylate not only its cognate tRNA(Asp) but also tRNA(Asn). Reaction proceeds in two steps: L-aspartate is first activated by ATP to form Asp-AMP and then transferred to the acceptor end of tRNA(Asp/Asn). This is Aspartate--tRNA(Asp/Asn) ligase from Parasynechococcus marenigrum (strain WH8102).